The sequence spans 196 residues: dITP/XTP pyrophosphatase (196 aa).

7-12 (THNPGK) lines the substrate pocket. D40 and D69 together coordinate Mg(2+). D69 (proton acceptor) is an active-site residue. Residues S70, 150 to 153 (FGYD), K173, and 178 to 179 (HR) each bind substrate.

The protein belongs to the HAM1 NTPase family. As to quaternary structure, homodimer. Requires Mg(2+) as cofactor.

It catalyses the reaction XTP + H2O = XMP + diphosphate + H(+). It carries out the reaction dITP + H2O = dIMP + diphosphate + H(+). The catalysed reaction is ITP + H2O = IMP + diphosphate + H(+). Functionally, pyrophosphatase that catalyzes the hydrolysis of nucleoside triphosphates to their monophosphate derivatives, with a high preference for the non-canonical purine nucleotides XTP (xanthosine triphosphate), dITP (deoxyinosine triphosphate) and ITP. Seems to function as a house-cleaning enzyme that removes non-canonical purine nucleotides from the nucleotide pool, thus preventing their incorporation into DNA/RNA and avoiding chromosomal lesions. The chain is dITP/XTP pyrophosphatase from Exiguobacterium sp. (strain ATCC BAA-1283 / AT1b).